The following is a 233-amino-acid chain: Cilia- and flagella-associated protein 299 (233 aa).

Abundantly expressed in testis, specifically in spermatogonia and primary spermatocytes but not in secondary spermatocytes and spermatids.

Its subcellular location is the cytoplasm. The protein localises to the nucleus. In terms of biological role, may be involved in spermatogenesis. This is Cilia- and flagella-associated protein 299 from Mus musculus (Mouse).